The primary structure comprises 382 residues: MAILPLSISHSLTSALSATSSGIGRPVARLLHPRVPSRPTVICLAAPPKVPVPIASPASLGDDPSKWDPAECDALLRGGEQVASVLQEMLKLMEDMEMDGSFESLAVELIAQGVIGKRVDEMESGFLMALDYMIQLAEKDSDNERKSLLEVVKQTVLDHLTKKCPPHVQVVGLLCQTEKKDSRHELLRRVAAGGGVFKNDKGLKCQIPGANLNDIANQADDLLESMESRPTIPDRKLLARLVIVREEARNMMGGGLLDERNDRGFTTLPEAEVNFLSKLVALKPGKALERMIKDVMQGKAEGADNIENANAGPDSKLNHLTGISGRGSVTGLKPRPVRPGMFLETVSKVLGGIYANNTSGITAQHLEWVHQTTLKILQEMAF.

The transit peptide at Met-1 to Leu-44 directs the protein to the chloroplast.

Its subcellular location is the plastid. The protein localises to the chloroplast stroma. The protein resides in the chloroplast nucleoid. In terms of biological role, plays an essential role in early steps of chloroplast development. May be involved in the redox control of plastid gene expression by maintening the redox state around chloroplast nucleoids. May positively regulate plastid-encoded RNA polymerase (PEP) activity. The polypeptide is Protein PEP-RELATED DEVELOPMENT ARRESTED 1 homolog, chloroplastic (Oryza sativa subsp. japonica (Rice)).